Here is an 83-residue protein sequence, read N- to C-terminus: Small ribosomal subunit protein bS16 (83 aa).

Belongs to the bacterial ribosomal protein bS16 family.

This Azoarcus sp. (strain BH72) protein is Small ribosomal subunit protein bS16.